A 325-amino-acid chain; its full sequence is Cytochrome c1, heme protein, mitochondrial (325 aa).

A mitochondrion-targeting transit peptide spans 1 to 84; that stretch reads MAAAAATLRG…AVALHSAVSA (84 aa). The Mitochondrial intermembrane portion of the chain corresponds to 85–281; sequence SDLELHPPSY…TFLRWAAEPE (197 aa). The region spanning 108 to 209 is the Cytochrome c domain; that stretch reads TSIRRGFQVY…IVRARHGGED (102 aa). Cysteine 121, cysteine 124, histidine 125, and methionine 244 together coordinate heme c. The chain crosses the membrane as a helical span at residues 282–315; sequence HDHRKRMGLKMLLMMGLLLPLVYAMKRHKWSVLK. Residues 316-325 are Mitochondrial matrix-facing; the sequence is SRKLAYRPPK.

This sequence belongs to the cytochrome c family. Component of the ubiquinol-cytochrome c oxidoreductase (cytochrome b-c1 complex, complex III, CIII), a multisubunit enzyme composed of 11 subunits. The complex is composed of 3 respiratory subunits cytochrome b, cytochrome c1 and Rieske protein UQCRFS1, 2 core protein subunits UQCRC1/QCR1 and UQCRC2/QCR2, and 6 low-molecular weight protein subunits UQCRH/QCR6, UQCRB/QCR7, UQCRQ/QCR8, UQCR10/QCR9, UQCR11/QCR10 and subunit 9, the cleavage product of Rieske protein UQCRFS1. The complex exists as an obligatory dimer and forms supercomplexes (SCs) in the inner mitochondrial membrane with NADH-ubiquinone oxidoreductase (complex I, CI) and cytochrome c oxidase (complex IV, CIV), resulting in different assemblies (supercomplex SCI(1)III(2)IV(1) and megacomplex MCI(2)III(2)IV(2)). Interacts with FLVCR2; this interaction occurs in the absence of heme and is disrupted upon heme binding. Heme c serves as cofactor.

It localises to the mitochondrion inner membrane. It carries out the reaction a quinol + 2 Fe(III)-[cytochrome c](out) = a quinone + 2 Fe(II)-[cytochrome c](out) + 2 H(+)(out). Its function is as follows. Component of the ubiquinol-cytochrome c oxidoreductase, a multisubunit transmembrane complex that is part of the mitochondrial electron transport chain which drives oxidative phosphorylation. The respiratory chain contains 3 multisubunit complexes succinate dehydrogenase (complex II, CII), ubiquinol-cytochrome c oxidoreductase (cytochrome b-c1 complex, complex III, CIII) and cytochrome c oxidase (complex IV, CIV), that cooperate to transfer electrons derived from NADH and succinate to molecular oxygen, creating an electrochemical gradient over the inner membrane that drives transmembrane transport and the ATP synthase. The cytochrome b-c1 complex catalyzes electron transfer from ubiquinol to cytochrome c, linking this redox reaction to translocation of protons across the mitochondrial inner membrane, with protons being carried across the membrane as hydrogens on the quinol. In the process called Q cycle, 2 protons are consumed from the matrix, 4 protons are released into the intermembrane space and 2 electrons are passed to cytochrome c. Cytochrome c1 is a catalytic core subunit containing a c-type heme. It transfers electrons from the [2Fe-2S] iron-sulfur cluster of the Rieske protein to cytochrome c. In Bos taurus (Bovine), this protein is Cytochrome c1, heme protein, mitochondrial (CYC1).